The primary structure comprises 508 residues: GTPase Obg (508 aa).

An Obg domain is found at 2 to 159 (ARFVDRVVLH…HDVILELKSM (158 aa)). Residues 160–341 (ADIGLVGFPS…LKYAMLDLVQ (182 aa)) enclose the OBG-type G domain. Residues 166 to 173 (GFPSAGKS), 191 to 195 (FTTLQ), 212 to 215 (DVPG), 292 to 295 (NKAD), and 322 to 324 (SAV) contribute to the GTP site. Mg(2+) is bound by residues serine 173 and threonine 193. In terms of domain architecture, OCT spans 364-444 (DARKKNKDFE…IGEVSFEWEP (81 aa)).

It belongs to the TRAFAC class OBG-HflX-like GTPase superfamily. OBG GTPase family. Monomer. It depends on Mg(2+) as a cofactor.

It localises to the cytoplasm. Functionally, an essential GTPase which binds GTP, GDP and possibly (p)ppGpp with moderate affinity, with high nucleotide exchange rates and a fairly low GTP hydrolysis rate. Plays a role in control of the cell cycle, stress response, ribosome biogenesis and in those bacteria that undergo differentiation, in morphogenesis control. This is GTPase Obg from Corynebacterium diphtheriae (strain ATCC 700971 / NCTC 13129 / Biotype gravis).